We begin with the raw amino-acid sequence, 412 residues long: Putative competence-damage inducible protein (412 aa).

Belongs to the CinA family.

The sequence is that of Putative competence-damage inducible protein from Bacillus cereus (strain B4264).